A 459-amino-acid chain; its full sequence is Cysteine--tRNA ligase (459 aa).

Residue C28 coordinates Zn(2+). Residues 30 to 40 carry the 'HIGH' region motif; sequence VTIYDLCHIGH. Positions 209, 234, and 238 each coordinate Zn(2+). Positions 266 to 270 match the 'KMSKS' region motif; the sequence is KMSKS. An ATP-binding site is contributed by K269.

Belongs to the class-I aminoacyl-tRNA synthetase family. As to quaternary structure, monomer. Requires Zn(2+) as cofactor.

The protein resides in the cytoplasm. It catalyses the reaction tRNA(Cys) + L-cysteine + ATP = L-cysteinyl-tRNA(Cys) + AMP + diphosphate. The chain is Cysteine--tRNA ligase from Shewanella piezotolerans (strain WP3 / JCM 13877).